Reading from the N-terminus, the 368-residue chain is Phospho-N-acetylmuramoyl-pentapeptide-transferase (368 aa).

10 consecutive transmembrane segments (helical) span residues Gly-34–Leu-54, Thr-79–Ala-99, Leu-102–Tyr-122, Ala-140–Gly-160, Leu-176–Gly-196, Gly-207–Ala-227, Leu-247–Pro-267, Ile-271–Ala-291, Ile-296–Val-316, and Gln-345–Leu-365.

This sequence belongs to the glycosyltransferase 4 family. MraY subfamily. The cofactor is Mg(2+).

It is found in the cell inner membrane. The catalysed reaction is UDP-N-acetyl-alpha-D-muramoyl-L-alanyl-gamma-D-glutamyl-meso-2,6-diaminopimeloyl-D-alanyl-D-alanine + di-trans,octa-cis-undecaprenyl phosphate = di-trans,octa-cis-undecaprenyl diphospho-N-acetyl-alpha-D-muramoyl-L-alanyl-D-glutamyl-meso-2,6-diaminopimeloyl-D-alanyl-D-alanine + UMP. Its pathway is cell wall biogenesis; peptidoglycan biosynthesis. Functionally, catalyzes the initial step of the lipid cycle reactions in the biosynthesis of the cell wall peptidoglycan: transfers peptidoglycan precursor phospho-MurNAc-pentapeptide from UDP-MurNAc-pentapeptide onto the lipid carrier undecaprenyl phosphate, yielding undecaprenyl-pyrophosphoryl-MurNAc-pentapeptide, known as lipid I. This Bradyrhizobium sp. (strain ORS 278) protein is Phospho-N-acetylmuramoyl-pentapeptide-transferase.